A 314-amino-acid polypeptide reads, in one-letter code: 3'-5' exoribonuclease YhaM (314 aa).

An HD domain is found at 163–279 (HVVSMLDLAK…LHYIDNLDAK (117 aa)).

The protein belongs to the YhaM family.

In terms of biological role, shows a 3'-5' exoribonuclease activity. This is 3'-5' exoribonuclease YhaM from Bacillus mycoides (strain KBAB4) (Bacillus weihenstephanensis).